Reading from the N-terminus, the 121-residue chain is Holo-[acyl-carrier-protein] synthase (121 aa).

Asp8 and Glu55 together coordinate Mg(2+).

This sequence belongs to the P-Pant transferase superfamily. AcpS family. Requires Mg(2+) as cofactor.

The protein resides in the cytoplasm. It catalyses the reaction apo-[ACP] + CoA = holo-[ACP] + adenosine 3',5'-bisphosphate + H(+). Transfers the 4'-phosphopantetheine moiety from coenzyme A to a Ser of acyl-carrier-protein. This Caldicellulosiruptor bescii (strain ATCC BAA-1888 / DSM 6725 / KCTC 15123 / Z-1320) (Anaerocellum thermophilum) protein is Holo-[acyl-carrier-protein] synthase.